The sequence spans 708 residues: ATP-dependent RNA helicase laf-1 (708 aa).

Residues 1-21 show a composition bias toward low complexity; that stretch reads MESNQSNNGGSGNAALNRGGR. The interval 1–191 is disordered; it reads MESNQSNNGG…RGTSKWENRG (191 aa). Over residues 48–70 the composition is skewed to gly residues; the sequence is GAGGGGYRRGGGNSGGGGGGGYD. Composition is skewed to basic and acidic residues over residues 72–83 and 90–99; these read GYNDNRDDRDNR and GRDRNYEDRG. Residues 100-123 are compositionally biased toward gly residues; that stretch reads YNGGGGGGGNRGYNNNRGGGGGGY. Positions 231-259 match the Q motif motif; that stretch reads SLFSDLSLHEWIEENIKTAGYDRPTPVQK. The 192-residue stretch at 262–453 folds into the Helicase ATP-binding domain; the sequence is IPALQGGRDL…QDFLKENYVF (192 aa). 275–282 is a binding site for ATP; the sequence is AQTGSGKT. The DEAD box signature appears at 397–400; it reads DEAD. The Helicase C-terminal domain maps to 465–626; the sequence is NIMQKIVWVE…ELPDWLEGMS (162 aa). The tract at residues 623-708 is disordered; the sequence is EGMSGDMRSG…RAQPQQDWWS (86 aa). Gly residues-rich tracts occupy residues 630–647 and 656–692; these read RSGG…GQRF and GGSG…GGGR. Residues 699-708 are compositionally biased toward polar residues; the sequence is RAQPQQDWWS.

It belongs to the DEAD box helicase family. DDX3/DED1 subfamily. In terms of assembly, binds RNA as a monomer at low laf-1 concentrations and as a dimer at high laf-1 concentrations. As to expression, expressed in the germline and soma of young adult hermaphrodites.

Its subcellular location is the cytoplasm. It localises to the cytoplasmic granule. It is found in the nucleus. The protein localises to the stress granule. The protein resides in the inflammasome. Its subcellular location is the cell membrane. It localises to the cell projection. It is found in the lamellipodium. It catalyses the reaction ATP + H2O = ADP + phosphate + H(+). Its function is as follows. Multifunctional ATP-dependent RNA helicase. Plays a role in RNA remodeling, but is not required for RNA unwinding. Binds to RNA in a concentration-dependent manner to stimulate annealing between two complementary strands of RNA. This process is also dependent upon ATP; ATP reduces binding to RNA and subsequently diminishes RNA annealing. Involved in many cellular processes, which do not necessarily require its ATPase/helicase catalytic activities. Involved in the regulation of transcription and translation initiation. Involved in innate immunity. Involved in both stress and inflammatory responses. Promotes liquid-liquid phase separation of P granules, which is a process important for intracellular organization and stress granule assembly. Required for embryonic development. Plays a role in sexual cell fate determination by negatively regulating the translation of the sex determining protein tra-2. May play a protective role in the response to heat and oxidative stress. May negatively regulate extrinsic apoptotic signaling pathway via death domain receptors. May be involved in mitotic chromosome segregation. The chain is ATP-dependent RNA helicase laf-1 from Caenorhabditis elegans.